Here is a 130-residue protein sequence, read N- to C-terminus: Small ribosomal subunit protein bS16 (130 aa).

Over residues Ala98–Glu109 the composition is skewed to basic and acidic residues. Residues Ala98–Gly130 form a disordered region. Residues Ala110–Gly130 show a composition bias toward low complexity.

It belongs to the bacterial ribosomal protein bS16 family.

The sequence is that of Small ribosomal subunit protein bS16 from Synechococcus sp. (strain CC9902).